Reading from the N-terminus, the 149-residue chain is Calmodulin-like protein 3 (149 aa).

4 consecutive EF-hand domains span residues 8-43 (EQIA…LGQN), 44-79 (PTEA…KMKD), 81-116 (DSEE…LGEK), and 117-149 (LSDE…LVSK). Residues Asp21, Asp23, Asp25, Ser27, Glu32, Asp57, Asp59, Asn61, Thr63, Glu68, Asp94, Asp96, Asn98, Glu105, Asp130, Asp132, Asp134, Gln136, and Glu141 each contribute to the Ca(2+) site.

Belongs to the calmodulin family. As to quaternary structure, interacts with MYO10, the interaction is calcium-dependent and essential for MYO10 function in filopodial extension.

May function as a specific light chain of unconventional myosin-10 (MYO10), also enhances MYO10 translation, possibly by acting as a chaperone for the emerging MYO10 heavy chain protein. May compete with calmodulin by binding, with different affinities, to cellular substrates. This is Calmodulin-like protein 3 (Calml3) from Mus musculus (Mouse).